The following is a 513-amino-acid chain: Quiannulatic acid synthase (513 aa).

The chain crosses the membrane as a helical span at residues valine 14–tyrosine 34. Residue asparagine 308 is glycosylated (N-linked (GlcNAc...) asparagine). Cysteine 477 provides a ligand contact to heme.

This sequence belongs to the cytochrome P450 family. Heme is required as a cofactor.

Its subcellular location is the membrane. The enzyme catalyses quiannulatene + 3 reduced [NADPH--hemoprotein reductase] + 3 O2 = quiannulatate + 3 oxidized [NADPH--hemoprotein reductase] + 4 H2O + 4 H(+). The protein operates within secondary metabolite biosynthesis; terpenoid biosynthesis. Its function is as follows. Cytochrome P450 monooxygenase; part of the gene cluster that mediates the biosynthesis of the pentacyclic sesterterpene quiannulatic acid. The first step of the pathway is performed by the sesterterpene synthase (QS) that possesses both prenyl transferase and terpene cyclase activity, converting isopentenyl diphosphate and dimethylallyl diphosphate into geranylfarnesyl diphosphate (GFPP) and further converting GFPP into quiannulatene via an unprecedented cyclization mode which involves three rounds of hydride shifts and two successive C-C bond migrations to construct the 5-6-5-5-5 fused ring. The cytochrome P450 monooxygenase Qnn-P450 then oxidizes quiannulatene at C-19 in 3 successive reactions to afford quiannulatic acid. In Emericella variicolor (Aspergillus stellatus), this protein is Quiannulatic acid synthase.